The following is a 317-amino-acid chain: Glucose-6-phosphate isomerase, cytosolic 2B (317 aa).

Glutamate 108 (proton donor) is an active-site residue. Active-site residues include histidine 139 and lysine 264.

Belongs to the GPI family. Homodimer.

It localises to the cytoplasm. The enzyme catalyses alpha-D-glucose 6-phosphate = beta-D-fructose 6-phosphate. Its pathway is carbohydrate degradation; glycolysis; D-glyceraldehyde 3-phosphate and glycerone phosphate from D-glucose: step 2/4. In Clarkia lewisii (Farewell-to-spring), this protein is Glucose-6-phosphate isomerase, cytosolic 2B (PGIC2-B).